The following is a 474-amino-acid chain: Adenylyl cyclase-associated protein 1 (474 aa).

A2 is subject to N-acetylalanine. A Phosphotyrosine modification is found at Y31. Residue S34 is modified to Phosphoserine. K80 bears the N6-acetyllysine mark. Disordered stretches follow at residues 215–253 (ELSGLPSGPSVGSGPPPPPPGPPPPPISTSSGSDDSASR) and 277–316 (MKTHKNPALKAQSGPVRSGPKPFSAPKPQTSPSPKPATKK). Over residues 217-227 (SGLPSGPSVGS) the composition is skewed to low complexity. Residues 228-241 (GPPPPPPGPPPPPI) show a composition bias toward pro residues. N6-methyllysine is present on K286. 3 positions are modified to phosphoserine: S289, S294, and S300. Positions 299-311 (FSAPKPQTSPSPK) are enriched in pro residues. The residue at position 306 (T306) is a Phosphothreonine. Residues S307 and S309 each carry the phosphoserine modification. Residues 312–452 (PATKKEPALL…EGGDFNEFPV (141 aa)) enclose the C-CAP/cofactor C-like domain. A Glycyl lysine isopeptide (Lys-Gly) (interchain with G-Cter in SUMO1) cross-link involves residue K347.

It belongs to the CAP family. As to quaternary structure, homodimer. Binds actin monomers. In terms of tissue distribution, ubiquitous.

The protein resides in the cell membrane. Its function is as follows. Directly regulates filament dynamics and has been implicated in a number of complex developmental and morphological processes, including mRNA localization and the establishment of cell polarity. This is Adenylyl cyclase-associated protein 1 (Cap1) from Mus musculus (Mouse).